Here is a 1098-residue protein sequence, read N- to C-terminus: Tudor domain-containing protein 7 (1098 aa).

The HTH OST-type 1 domain maps to E3 to A76. A disordered region spans residues A129–A156. The HTH OST-type 2 domain maps to K233–K302. S319 is modified (phosphoserine). The region spanning M337 to L406 is the HTH OST-type 3 domain. 2 Tudor domains span residues A513–L570 and L703–E760. A disordered region spans residues S855–G874. The residue at position 859 (S859) is a Phosphoserine. The segment at N861–N1098 is interaction with CDK17. The tract at residues T893 to N1098 is interaction with CABLES1.

The protein belongs to the TDRD7 family. Found in a mRNP complex, at least composed of TDRD1, TDRD6, TDRD7 and DDX4. Found in a complex containing CABLES1, CDK16 and CDK17. Interacts with CABLES1, CDK17 and PIWIL1.

Its subcellular location is the cytoplasm. Its function is as follows. Component of specific cytoplasmic RNA granules involved in post-transcriptional regulation of specific genes: probably acts by binding to specific mRNAs and regulating their translation. Required for lens transparency during lens development, by regulating translation of genes such as CRYBB3 and HSPB1 in the developing lens. Also required during spermatogenesis. The polypeptide is Tudor domain-containing protein 7 (TDRD7) (Homo sapiens (Human)).